Reading from the N-terminus, the 503-residue chain is Maturase K (503 aa).

Belongs to the intron maturase 2 family. MatK subfamily.

It is found in the plastid. The protein resides in the chloroplast. Functionally, usually encoded in the trnK tRNA gene intron. Probably assists in splicing its own and other chloroplast group II introns. The protein is Maturase K of Rosa canina (Dog rose).